Here is a 169-residue protein sequence, read N- to C-terminus: Ureidoglycolate lyase (169 aa).

This sequence belongs to the ureidoglycolate lyase family. In terms of assembly, homodimer. Ni(2+) is required as a cofactor.

It carries out the reaction (S)-ureidoglycolate = urea + glyoxylate. Its pathway is nitrogen metabolism; (S)-allantoin degradation. In terms of biological role, catalyzes the catabolism of the allantoin degradation intermediate (S)-ureidoglycolate, generating urea and glyoxylate. Involved in the utilization of allantoin as nitrogen source. This Brucella anthropi (strain ATCC 49188 / DSM 6882 / CCUG 24695 / JCM 21032 / LMG 3331 / NBRC 15819 / NCTC 12168 / Alc 37) (Ochrobactrum anthropi) protein is Ureidoglycolate lyase.